A 471-amino-acid chain; its full sequence is Mixed lineage kinase domain-like protein (471 aa).

The tract at residues 1–149 (MENLKHIITL…DADEDRRAFQ (149 aa)) is N-terminal bundle and brace (NBB); mediates INSP6 binding. Positions 55–84 (SEKLTTAMNRFKAALEEANGEIEKFSNRSN) form a coiled coil. Position 125 is a phosphoserine (Ser-125). A coiled-coil region spans residues 139–180 (QDADEDRRAFQMLRRDNEKIEASLRRLEINMKEIKETLRQYL). A Protein kinase domain is found at 194–469 (KEIKKEQLSG…DEILKKLSTF (276 aa)). ATP is bound by residues 209-217 (LRENEVSTL) and Lys-230. Position 357 is a phosphothreonine; by RIPK3 (Thr-357). 2 positions are modified to phosphoserine; by RIPK3: Ser-358 and Ser-360.

It belongs to the protein kinase superfamily. Homooligomer. Homotrimer; forms homotrimers on necroptosis induction. Upon TNF-induced necrosis, forms in complex with PGAM5, RIPK1 and RIPK3. Within this complex, may play a role in the proper targeting of RIPK1-RIPK3 to its downstream effector PGAM5. Interacts with RIPK3; the interaction is direct and promotes its phosphorylation and subsequent activation. In terms of processing, phosphorylation by RIPK3 induces a conformational switch that is required for necroptosis. It also induces homotrimerization and localization to the plasma membrane.

Its subcellular location is the cytoplasm. It is found in the cell membrane. The protein localises to the nucleus. With respect to regulation, activated via binding to highly phosphorylated inositol phosphates such as inositolhexakisphosphate (InsP6) which mediates the release of an N-terminal auto-inhibitory region. Activation requires not only RIPK3-dependent phosphorylation but also binding to highly phosphorylated inositol phosphates. Inhibited by necrosulfonamide, a specific inhibitor of necroptosis that targets Cys-86. In terms of biological role, pseudokinase that plays a key role in TNF-induced necroptosis, a programmed cell death process. Does not have protein kinase activity. Activated following phosphorylation by RIPK3, leading to homotrimerization, localization to the plasma membrane and execution of programmed necrosis characterized by calcium influx and plasma membrane damage. In addition to TNF-induced necroptosis, necroptosis can also take place in the nucleus in response to orthomyxoviruses infection: following activation by ZBP1, MLKL is phosphorylated by RIPK3 in the nucleus, triggering disruption of the nuclear envelope and leakage of cellular DNA into the cytosol.following ZBP1 activation, which senses double-stranded Z-RNA structures, nuclear RIPK3 catalyzes phosphorylation and activation of MLKL, promoting disruption of the nuclear envelope and leakage of cellular DNA into the cytosol. Binds to highly phosphorylated inositol phosphates such as inositolhexakisphosphate (InsP6) which is essential for its necroptotic function. The polypeptide is Mixed lineage kinase domain-like protein (Homo sapiens (Human)).